Here is a 625-residue protein sequence, read N- to C-terminus: Phosphomethylpyrimidine synthase (625 aa).

Residues Asn230, Met259, Tyr288, His324, 344-346 (SRG), 385-388 (DGLR), and Glu424 contribute to the substrate site. Position 428 (His428) interacts with Zn(2+). Tyr451 serves as a coordination point for substrate. Residue His492 coordinates Zn(2+). [4Fe-4S] cluster-binding residues include Cys572, Cys575, and Cys580.

This sequence belongs to the ThiC family. In terms of assembly, homodimer. It depends on [4Fe-4S] cluster as a cofactor.

It carries out the reaction 5-amino-1-(5-phospho-beta-D-ribosyl)imidazole + S-adenosyl-L-methionine = 4-amino-2-methyl-5-(phosphooxymethyl)pyrimidine + CO + 5'-deoxyadenosine + formate + L-methionine + 3 H(+). It functions in the pathway cofactor biosynthesis; thiamine diphosphate biosynthesis. Functionally, catalyzes the synthesis of the hydroxymethylpyrimidine phosphate (HMP-P) moiety of thiamine from aminoimidazole ribotide (AIR) in a radical S-adenosyl-L-methionine (SAM)-dependent reaction. The chain is Phosphomethylpyrimidine synthase from Xanthomonas axonopodis pv. citri (strain 306).